The primary structure comprises 1030 residues: Isoleucine--tRNA ligase 2 (1030 aa).

Residues 48–58 (PFATGLPHYGH) carry the 'HIGH' region motif. The short motif at 589-593 (KMSKR) is the 'KMSKS' region element. Lys592 lines the ATP pocket.

It belongs to the class-I aminoacyl-tRNA synthetase family. IleS type 2 subfamily. Monomer. Zn(2+) is required as a cofactor.

It localises to the cytoplasm. The catalysed reaction is tRNA(Ile) + L-isoleucine + ATP = L-isoleucyl-tRNA(Ile) + AMP + diphosphate. Catalyzes the attachment of isoleucine to tRNA(Ile). As IleRS can inadvertently accommodate and process structurally similar amino acids such as valine, to avoid such errors it has two additional distinct tRNA(Ile)-dependent editing activities. One activity is designated as 'pretransfer' editing and involves the hydrolysis of activated Val-AMP. The other activity is designated 'posttransfer' editing and involves deacylation of mischarged Val-tRNA(Ile). Its function is as follows. Confers high-level resistance to the antibiotic mupirocin (pseudomonic acid A), an Ile-analog produced by P.fluorescens NCIMB 10586 itself that competitively inhibits activation by Ile-tRNA synthetase, thus inhibiting protein biosynthesis. This chain is Isoleucine--tRNA ligase 2 (ileS2), found in Pseudomonas fluorescens.